The sequence spans 213 residues: tRNA (guanine-N(7)-)-methyltransferase (213 aa).

Residues glutamate 44, aspartate 69, aspartate 96, and aspartate 118 each coordinate S-adenosyl-L-methionine. Aspartate 118 is a catalytic residue. Lysine 122 provides a ligand contact to substrate. The interval 124-129 (RHEKRR) is interaction with RNA. Residues aspartate 154 and 191 to 194 (TEYE) contribute to the substrate site.

This sequence belongs to the class I-like SAM-binding methyltransferase superfamily. TrmB family.

It carries out the reaction guanosine(46) in tRNA + S-adenosyl-L-methionine = N(7)-methylguanosine(46) in tRNA + S-adenosyl-L-homocysteine. Its pathway is tRNA modification; N(7)-methylguanine-tRNA biosynthesis. Catalyzes the formation of N(7)-methylguanine at position 46 (m7G46) in tRNA. This chain is tRNA (guanine-N(7)-)-methyltransferase, found in Streptococcus thermophilus (strain CNRZ 1066).